The primary structure comprises 113 residues: Large ribosomal subunit protein P2 (113 aa).

Positions 60–113 (SKVSSLSAGAGPSGGAAAAGADAGAAEAEKEEEPQEEEADVNMGDIFGGDDEDY) are disordered. Residues 74-85 (GAAAAGADAGAA) are compositionally biased toward low complexity. Residues 88 to 99 (EKEEEPQEEEAD) show a composition bias toward acidic residues.

Belongs to the eukaryotic ribosomal protein P1/P2 family. In terms of assembly, P1 and P2 exist as dimers at the large ribosomal subunit. In terms of processing, phosphorylated.

Plays an important role in the elongation step of protein synthesis. In Euplotes raikovi, this protein is Large ribosomal subunit protein P2.